Consider the following 512-residue polypeptide: MTTSPLHTRFGGIAELRAALAGRQVSARELARSALDAAQAAGDLNTFLHIDPDLTLAQADAADAALAAGTAGPLAGVPIAHKDAFVTRGWRTTAGSKMLEGYASPFDATVVQRLQAAGAVSLGKLNCDEFAMGSANENSAYGPVRNPWDPNAVPGGSSGGSAAAVAARLVAAATGTDTGGSVRQPAALCGVSGIKPTYGTVSRYGIVAFGSSLDQAGPLAPSSRDLLELLDPMSGFDPQDATSLETCDGAPNAPGRIRAAYDAAQAACDAAGSQPLKGLRIGVPQEYFGAGLAPDVAAAVEAALAQFEALGAQRVAVSLPRTELAIPAYYVIAPAEASSNLARYDGVRYGHRAAEYADLNQMIARSRAEGFGDEVKRRILIGTYVLSHGYYDAYYLQAQRVRRLIAQDFQRAYAGQCDVIMGPVAPTVAKNIGDNRDDPTADWLADVYTLGVSLAGLPAMSIPAGFGNGGRPVGLQIIGNYFDEGRLLAIADRYQQVTDWHRRVPGQQGTEQ.

Residues lysine 82 and serine 157 each act as charge relay system in the active site. Catalysis depends on serine 181, which acts as the Acyl-ester intermediate.

Belongs to the amidase family. GatA subfamily. In terms of assembly, heterotrimer of A, B and C subunits.

The catalysed reaction is L-glutamyl-tRNA(Gln) + L-glutamine + ATP + H2O = L-glutaminyl-tRNA(Gln) + L-glutamate + ADP + phosphate + H(+). In terms of biological role, allows the formation of correctly charged Gln-tRNA(Gln) through the transamidation of misacylated Glu-tRNA(Gln) in organisms which lack glutaminyl-tRNA synthetase. The reaction takes place in the presence of glutamine and ATP through an activated gamma-phospho-Glu-tRNA(Gln). The protein is Glutamyl-tRNA(Gln) amidotransferase subunit A of Bordetella petrii (strain ATCC BAA-461 / DSM 12804 / CCUG 43448).